The sequence spans 468 residues: 6-phospho-beta-galactosidase (468 aa).

D-galactose 6-phosphate is bound by residues Gln-19, His-116, Asn-159, Glu-160, and Asn-297. Glu-160 functions as the Proton donor in the catalytic mechanism. The active-site Nucleophile is the Glu-375. D-galactose 6-phosphate-binding residues include Ser-428, Trp-429, Lys-435, and Tyr-437.

This sequence belongs to the glycosyl hydrolase 1 family.

It catalyses the reaction a 6-phospho-beta-D-galactoside + H2O = D-galactose 6-phosphate + an alcohol. Its pathway is carbohydrate metabolism; lactose degradation; D-galactose 6-phosphate and beta-D-glucose from lactose 6-phosphate: step 1/1. This chain is 6-phospho-beta-galactosidase, found in Lactococcus lactis subsp. lactis (Streptococcus lactis).